The primary structure comprises 196 residues: DnaA initiator-associating protein DiaA (196 aa).

The region spanning 34–196 (LVQSLLNGNK…DNTLFPHQDD (163 aa)) is the SIS domain.

It belongs to the SIS family. DiaA subfamily. As to quaternary structure, homotetramer; dimer of dimers.

In terms of biological role, required for the timely initiation of chromosomal replication via direct interactions with the DnaA initiator protein. This is DnaA initiator-associating protein DiaA from Cronobacter sakazakii (strain ATCC BAA-894) (Enterobacter sakazakii).